Reading from the N-terminus, the 191-residue chain is Crossover junction endodeoxyribonuclease RuvC (191 aa).

Active-site residues include aspartate 7, glutamate 67, and aspartate 141. Mg(2+) contacts are provided by aspartate 7, glutamate 67, and aspartate 141.

Belongs to the RuvC family. Homodimer which binds Holliday junction (HJ) DNA. The HJ becomes 2-fold symmetrical on binding to RuvC with unstacked arms; it has a different conformation from HJ DNA in complex with RuvA. In the full resolvosome a probable DNA-RuvA(4)-RuvB(12)-RuvC(2) complex forms which resolves the HJ. Mg(2+) is required as a cofactor.

It is found in the cytoplasm. The enzyme catalyses Endonucleolytic cleavage at a junction such as a reciprocal single-stranded crossover between two homologous DNA duplexes (Holliday junction).. Functionally, the RuvA-RuvB-RuvC complex processes Holliday junction (HJ) DNA during genetic recombination and DNA repair. Endonuclease that resolves HJ intermediates. Cleaves cruciform DNA by making single-stranded nicks across the HJ at symmetrical positions within the homologous arms, yielding a 5'-phosphate and a 3'-hydroxyl group; requires a central core of homology in the junction. The consensus cleavage sequence is 5'-(A/T)TT(C/G)-3'. Cleavage occurs on the 3'-side of the TT dinucleotide at the point of strand exchange. HJ branch migration catalyzed by RuvA-RuvB allows RuvC to scan DNA until it finds its consensus sequence, where it cleaves and resolves the cruciform DNA. The protein is Crossover junction endodeoxyribonuclease RuvC of Myxococcus xanthus (strain DK1622).